A 369-amino-acid polypeptide reads, in one-letter code: 4-hydroxy-3-methylbut-2-en-1-yl diphosphate synthase (flavodoxin) (369 aa).

[4Fe-4S] cluster is bound by residues cysteine 270, cysteine 273, cysteine 305, and glutamate 312.

It belongs to the IspG family. The cofactor is [4Fe-4S] cluster.

It carries out the reaction (2E)-4-hydroxy-3-methylbut-2-enyl diphosphate + oxidized [flavodoxin] + H2O + 2 H(+) = 2-C-methyl-D-erythritol 2,4-cyclic diphosphate + reduced [flavodoxin]. It functions in the pathway isoprenoid biosynthesis; isopentenyl diphosphate biosynthesis via DXP pathway; isopentenyl diphosphate from 1-deoxy-D-xylulose 5-phosphate: step 5/6. Converts 2C-methyl-D-erythritol 2,4-cyclodiphosphate (ME-2,4cPP) into 1-hydroxy-2-methyl-2-(E)-butenyl 4-diphosphate. The polypeptide is 4-hydroxy-3-methylbut-2-en-1-yl diphosphate synthase (flavodoxin) (Psychromonas ingrahamii (strain DSM 17664 / CCUG 51855 / 37)).